Reading from the N-terminus, the 204-residue chain is Arginine exporter protein ArgO (204 aa).

6 helical membrane passes run 1 to 21 (MWAV…PLGP), 37 to 57 (LMVA…GIFG), 67 to 87 (LLLG…GWGA), 111 to 131 (IIAT…DTFV), 154 to 174 (TASF…APWL), and 179 to 199 (VQRV…LQLA).

The protein belongs to the LysE/ArgO transporter (TC 2.A.75) family.

Its subcellular location is the cell inner membrane. The enzyme catalyses L-arginine(in) = L-arginine(out). Functionally, involved in the export of arginine. Important to control the intracellular level of arginine and the correct balance between arginine and lysine. This is Arginine exporter protein ArgO from Pectobacterium atrosepticum (strain SCRI 1043 / ATCC BAA-672) (Erwinia carotovora subsp. atroseptica).